Consider the following 260-residue polypeptide: UPF0246 protein APJL_0596 (260 aa).

It belongs to the UPF0246 family.

The chain is UPF0246 protein APJL_0596 from Actinobacillus pleuropneumoniae serotype 3 (strain JL03).